A 160-amino-acid chain; its full sequence is Nucleotide-binding protein VC_1508 (160 aa).

Belongs to the YajQ family.

Its function is as follows. Nucleotide-binding protein. This is Nucleotide-binding protein VC_1508 from Vibrio cholerae serotype O1 (strain ATCC 39315 / El Tor Inaba N16961).